The chain runs to 610 residues: Phosphomethylpyrimidine synthase (610 aa).

Substrate is bound by residues N216, M245, Y274, H310, 330-332, 371-374, and E410; these read SRG and DGLR. Zn(2+) is bound at residue H414. Y437 is a binding site for substrate. Zn(2+) is bound at residue H478. [4Fe-4S] cluster is bound by residues C558, C561, and C566.

This sequence belongs to the ThiC family. In terms of assembly, homodimer. [4Fe-4S] cluster is required as a cofactor.

The catalysed reaction is 5-amino-1-(5-phospho-beta-D-ribosyl)imidazole + S-adenosyl-L-methionine = 4-amino-2-methyl-5-(phosphooxymethyl)pyrimidine + CO + 5'-deoxyadenosine + formate + L-methionine + 3 H(+). The protein operates within cofactor biosynthesis; thiamine diphosphate biosynthesis. In terms of biological role, catalyzes the synthesis of the hydroxymethylpyrimidine phosphate (HMP-P) moiety of thiamine from aminoimidazole ribotide (AIR) in a radical S-adenosyl-L-methionine (SAM)-dependent reaction. This is Phosphomethylpyrimidine synthase from Rhizobium etli (strain ATCC 51251 / DSM 11541 / JCM 21823 / NBRC 15573 / CFN 42).